Here is a 514-residue protein sequence, read N- to C-terminus: 2,3-bisphosphoglycerate-independent phosphoglycerate mutase (514 aa).

Mn(2+) is bound by residues aspartate 14 and serine 64. The active-site Phosphoserine intermediate is serine 64. Residues histidine 125, 155–156 (RD), arginine 187, arginine 193, 263–266 (RADR), and lysine 336 each bind substrate. Aspartate 403, histidine 407, aspartate 444, histidine 445, and histidine 463 together coordinate Mn(2+).

It belongs to the BPG-independent phosphoglycerate mutase family. In terms of assembly, monomer. Mn(2+) is required as a cofactor.

It catalyses the reaction (2R)-2-phosphoglycerate = (2R)-3-phosphoglycerate. It participates in carbohydrate degradation; glycolysis; pyruvate from D-glyceraldehyde 3-phosphate: step 3/5. Its function is as follows. Catalyzes the interconversion of 2-phosphoglycerate and 3-phosphoglycerate. This is 2,3-bisphosphoglycerate-independent phosphoglycerate mutase from Shewanella sp. (strain ANA-3).